Reading from the N-terminus, the 1014-residue chain is DNA translocase FtsK 2 (1014 aa).

The chain crosses the membrane as a helical span at residues 1–21 (MFWIVLIVILLLALAGLFFVR). 3 disordered regions span residues 89–142 (ESEP…EDIA), 283–318 (RHAG…RRRV), and 487–525 (SQAV…AVSE). Residues 121-140 (EEAETEEAEAAEEEAADTED) show a composition bias toward acidic residues. Over residues 298–307 (DVSQGQSVSD) the composition is skewed to polar residues. The region spanning 662–871 (GQPVVTDLGK…FQVSSKIDSR (210 aa)) is the FtsK domain. Residue 682–687 (GSGKSV) participates in ATP binding.

This sequence belongs to the FtsK/SpoIIIE/SftA family. As to quaternary structure, homohexamer. Forms a ring that surrounds DNA.

It localises to the cell inner membrane. Its function is as follows. Essential cell division protein that coordinates cell division and chromosome segregation. The N-terminus is involved in assembly of the cell-division machinery. The C-terminus functions as a DNA motor that moves dsDNA in an ATP-dependent manner towards the dif recombination site, which is located within the replication terminus region. Translocation stops specifically at Xer-dif sites, where FtsK interacts with the Xer recombinase, allowing activation of chromosome unlinking by recombination. FtsK orienting polar sequences (KOPS) guide the direction of DNA translocation. FtsK can remove proteins from DNA as it translocates, but translocation stops specifically at XerCD-dif site, thereby preventing removal of XerC and XerD from dif. This is DNA translocase FtsK 2 (ftsK2) from Neisseria meningitidis serogroup A / serotype 4A (strain DSM 15465 / Z2491).